We begin with the raw amino-acid sequence, 425 residues long: CAAX prenyl protease 1 homolog (425 aa).

The next 5 helical transmembrane spans lie at 3–23 (LPYL…ETYL), 62–80 (FHFI…ILYY), 109–129 (LAFL…FSLY), 155–175 (GILL…IIVQ), and 188–208 (FMFA…APLF). H284 contributes to the Zn(2+) binding site. Residue E285 is part of the active site. H288 serves as a coordination point for Zn(2+). Transmembrane regions (helical) follow at residues 295–315 (VYSF…YTLV) and 332–352 (VIIG…LLSF). Residue E362 coordinates Zn(2+). The Proton donor role is filled by D366.

Belongs to the peptidase M48A family. The cofactor is Zn(2+).

It is found in the endoplasmic reticulum membrane. It catalyses the reaction Hydrolyzes the peptide bond -P2-(S-farnesyl or geranylgeranyl)C-P1'-P2'-P3'-COOH where P1' and P2' are amino acids with aliphatic side chains and P3' is any C-terminal residue.. In terms of biological role, proteolytically removes the C-terminal three residues of farnesylated proteins. In Oryza sativa subsp. japonica (Rice), this protein is CAAX prenyl protease 1 homolog (FACE1).